A 124-amino-acid chain; its full sequence is Large ribosomal subunit protein uL18 (124 aa).

The protein belongs to the universal ribosomal protein uL18 family. Part of the 50S ribosomal subunit; part of the 5S rRNA/L5/L18/L25 subcomplex. Contacts the 5S and 23S rRNAs.

Its function is as follows. This is one of the proteins that bind and probably mediate the attachment of the 5S RNA into the large ribosomal subunit, where it forms part of the central protuberance. This chain is Large ribosomal subunit protein uL18, found in Aquifex aeolicus (strain VF5).